The following is a 406-amino-acid chain: Phosphorylase b kinase gamma catalytic chain, liver/testis isoform (406 aa).

In terms of domain architecture, Protein kinase spans 24–291 (YDPKDIIGRG…AEQALQHPFF (268 aa)). Residues 30-38 (IGRGVSSVV) and K53 each bind ATP. Residue D153 is the Proton acceptor of the active site. The interval 306-330 (QRFRVAVWTILAAGRVALSSHRLRP) is calmodulin-binding (domain-N). Residues 346–370 (VRRLIDNCAFRLYGHWVKKGEQQNR) are calmodulin-binding (domain-C).

It belongs to the protein kinase superfamily. CAMK Ser/Thr protein kinase family. Hexadecamer of 4 heterotetramers, each composed of alpha, beta, gamma, and delta subunits. Alpha (PHKA1 or PHKA2) and beta (PHKB) are regulatory subunits, gamma (PHKG1 or PHKG2) is the catalytic subunit, and delta is calmodulin.

It catalyses the reaction 2 ATP + phosphorylase b = 2 ADP + phosphorylase a.. Functionally, catalytic subunit of the phosphorylase b kinase (PHK), which mediates the neural and hormonal regulation of glycogen breakdown (glycogenolysis) by phosphorylating and thereby activating glycogen phosphorylase. May regulate glycogeneolysis in the testis. In vitro, phosphorylates PYGM. This is Phosphorylase b kinase gamma catalytic chain, liver/testis isoform (Phkg2) from Mus musculus (Mouse).